A 105-amino-acid polypeptide reads, in one-letter code: Mitochondrial import inner membrane translocase subunit tim14 (105 aa).

Over 1–3 (MAS) the chain is Mitochondrial intermembrane. A helical transmembrane segment spans residues 4–23 (TFAIGLGVATAAFLGRAGYV). The Mitochondrial matrix portion of the chain corresponds to 24-105 (ALRRYQGGIN…EAKEFLDKHI (82 aa)). Positions 52–105 (EAALILELPERTLNKEKVRKKHRQLMLLNHPDRGGSPYLATKINEAKEFLDKHI) constitute a J domain.

This sequence belongs to the TIM14 family. Heterodimer with PAM18/pamR. Component of the PAM complex, at least composed of mtHsp70, MGE1/mgeA, tim44, PAM16/pamP, PAM17/pamQ and PAM18/pamR.

The protein localises to the mitochondrion inner membrane. Essential component of the PAM complex, a complex required for the translocation of transit peptide-containing proteins from the inner membrane into the mitochondrial matrix in an ATP-dependent manner. In the complex, it is required to stimulate activity of mtHSP70 (SSC1/sscA). The protein is Mitochondrial import inner membrane translocase subunit tim14 (pam18) of Aspergillus fumigatus (strain ATCC MYA-4609 / CBS 101355 / FGSC A1100 / Af293) (Neosartorya fumigata).